Reading from the N-terminus, the 242-residue chain is Small ribosomal subunit protein uS5 (242 aa).

The segment covering 1–14 (MADENSTGPGNQPE) has biased composition (polar residues). A disordered region spans residues 1–65 (MADENSTGPG…DRRPRDEDGG (65 aa)). A compositionally biased stretch (basic and acidic residues) spans 41 to 65 (DGGRGGRDGGRGRRDDRRPRDEDGG). In terms of domain architecture, S5 DRBM spans 68–131 (LIEKLVHINR…AAAKKAMIRV (64 aa)). A disordered region spans residues 204–242 (EQTSPKSVAQRRGKKVSDLIKRGGASDRAAEAEAAAVTE). A compositionally biased stretch (basic and acidic residues) spans 218–234 (KVSDLIKRGGASDRAAE).

This sequence belongs to the universal ribosomal protein uS5 family. Part of the 30S ribosomal subunit. Contacts proteins S4 and S8.

Functionally, with S4 and S12 plays an important role in translational accuracy. Located at the back of the 30S subunit body where it stabilizes the conformation of the head with respect to the body. The sequence is that of Small ribosomal subunit protein uS5 from Sphingopyxis alaskensis (strain DSM 13593 / LMG 18877 / RB2256) (Sphingomonas alaskensis).